A 132-amino-acid polypeptide reads, in one-letter code: Ribosome-binding factor A (132 aa).

The segment at 113–132 is disordered; sequence EANSTRAKDDDEADTPAKDD.

This sequence belongs to the RbfA family. As to quaternary structure, monomer. Binds 30S ribosomal subunits, but not 50S ribosomal subunits or 70S ribosomes.

The protein resides in the cytoplasm. One of several proteins that assist in the late maturation steps of the functional core of the 30S ribosomal subunit. Associates with free 30S ribosomal subunits (but not with 30S subunits that are part of 70S ribosomes or polysomes). Required for efficient processing of 16S rRNA. May interact with the 5'-terminal helix region of 16S rRNA. The chain is Ribosome-binding factor A from Burkholderia cenocepacia (strain HI2424).